An 802-amino-acid polypeptide reads, in one-letter code: MSELTTGRFSISDLDNVQITINNIVGAIEKQSDDIDVEMGPTVKPGVSSLRDWDHNILDRYNPVYTPMCDQCCYCTFGPCDLSGNKEGACGINLEGHNAREFMLRVITGAAAHSGHGRHLLHHLIGLYGKDHPLDVGATNIIAPNVQLVTGVQPKTLGDLDSVLSYVEEQITQLLAAIHVGQEGAAIDFESKALHGGMIDHVGMEISDIAQISCLDFPKSDEEAPLADIGMGCLDASKPTLIVIGHNVAAVTDIIDYMEDKGLNDKIELGGLCCTALDMTRYKTGDRTLPRAKVVGTLAKELKTIRSGIPDVIIVDEQCIRADVLKEASKLMIPVITTNDKVMYGLKDRSNDSIEDILEDLTTGKEKGALMFDYVKLGELAPRLTMMMSEIRKQKGIKALPTDEELKELADSCVHCLKCEVACPNSLPISEAMTALSEGDLSKFELLHDKCIACGRCEYACPKDIDIVNVIEKSSQRVISEEVGKVRVGRGPISDPEIREEGVNLVLGTTPGIVALVGCSNYPDGTKDLFTIADEMLRRSYIVVVSGCSAMDLGMYKGEDGLTLYEKYPSRFKSGGLLNTGSCVSNAHITGAVIKVASIFAQKNISGNYEEIADYTLNRVGAVGVAWGAYSQKAASIGTGCSRLGIPVILGPHGSKYRRALIAKPYEEEKWKVYDARNGSEMQIPAAPDYLLTTAETVEEMMPMLAKSCIRPSDNNMGRMIKLTHYMELSQKYLGIMPEDWYKFVRTETDLPLAKREKLLKILEEEHGWEIDWKRKKILSGPTMKSDVSAQPTNLKRLCKEA.

Positions 69, 72, 73, 75, 80, and 90 each coordinate [4Fe-4S] cluster. H113 contacts CO. Residues H246, C274, and C319 each coordinate [Ni-4Fe-4S] cluster. 4Fe-4S ferredoxin-type domains follow at residues 404–432 (EELKELADSCVHCLKCEVACPNSLPISEA) and 442–473 (SKFELLHDKCIACGRCEYACPKDIDIVNVIEK). Residues C413, C416, C419, C423, C451, C454, C457, and C461 each coordinate [4Fe-4S] cluster. Residues C519, C548, and C583 each coordinate [Ni-4Fe-4S] cluster.

The protein belongs to the Ni-containing carbon monoxide dehydrogenase family. In terms of assembly, heterotetramer of two alpha and two epsilon subunits. The ACDS complex is made up of alpha, epsilon, beta, gamma and delta subunits with a probable stoichiometry of (alpha(2)epsilon(2))(4)-beta(8)-(gamma(1)delta(1))(8). [4Fe-4S] cluster serves as cofactor. It depends on [Ni-4Fe-4S] cluster as a cofactor.

The catalysed reaction is CO + 2 oxidized [2Fe-2S]-[ferredoxin] + H2O = 2 reduced [2Fe-2S]-[ferredoxin] + CO2 + 2 H(+). It functions in the pathway one-carbon metabolism; methanogenesis from acetate. Functionally, part of the ACDS complex that catalyzes the reversible cleavage of acetyl-CoA, allowing growth on acetate as sole source of carbon and energy. The alpha-epsilon subcomponent functions as a carbon monoxide dehydrogenase. The chain is Acetyl-CoA decarbonylase/synthase complex subunit alpha from Methanococcoides burtonii (strain DSM 6242 / NBRC 107633 / OCM 468 / ACE-M).